The following is a 159-amino-acid chain: MTQLTHINAAGEAHMVDVSAKAETVREARAEAFVEMLPTTLAMIIEGSHHKGDVFATARIAGIQAAKRTWELIPLCHPLMLSKVEVQLEAQPEHSRVRIETCCRLTGKTGVEMEALTAASVAALTIYDMCKAVQKDMVIGPVRLLAKSGGKSGDFKVEL.

Substrate contacts are provided by residues 75–77 (LCH) and 113–114 (ME). Asp-128 is an active-site residue.

It belongs to the MoaC family. As to quaternary structure, homohexamer; trimer of dimers.

The catalysed reaction is (8S)-3',8-cyclo-7,8-dihydroguanosine 5'-triphosphate = cyclic pyranopterin phosphate + diphosphate. It functions in the pathway cofactor biosynthesis; molybdopterin biosynthesis. Its function is as follows. Catalyzes the conversion of (8S)-3',8-cyclo-7,8-dihydroguanosine 5'-triphosphate to cyclic pyranopterin monophosphate (cPMP). The chain is Cyclic pyranopterin monophosphate synthase from Serratia proteamaculans (strain 568).